Here is a 204-residue protein sequence, read N- to C-terminus: Leucyl/phenylalanyl-tRNA--protein transferase (204 aa).

Belongs to the L/F-transferase family.

Its subcellular location is the cytoplasm. It carries out the reaction N-terminal L-lysyl-[protein] + L-leucyl-tRNA(Leu) = N-terminal L-leucyl-L-lysyl-[protein] + tRNA(Leu) + H(+). The enzyme catalyses N-terminal L-arginyl-[protein] + L-leucyl-tRNA(Leu) = N-terminal L-leucyl-L-arginyl-[protein] + tRNA(Leu) + H(+). It catalyses the reaction L-phenylalanyl-tRNA(Phe) + an N-terminal L-alpha-aminoacyl-[protein] = an N-terminal L-phenylalanyl-L-alpha-aminoacyl-[protein] + tRNA(Phe). Functionally, functions in the N-end rule pathway of protein degradation where it conjugates Leu, Phe and, less efficiently, Met from aminoacyl-tRNAs to the N-termini of proteins containing an N-terminal arginine or lysine. The sequence is that of Leucyl/phenylalanyl-tRNA--protein transferase from Brucella anthropi (strain ATCC 49188 / DSM 6882 / CCUG 24695 / JCM 21032 / LMG 3331 / NBRC 15819 / NCTC 12168 / Alc 37) (Ochrobactrum anthropi).